We begin with the raw amino-acid sequence, 110 residues long: Endoribonuclease SymE (110 aa).

The SpoVT-AbrB domain maps to 29 to 74 (SRYPDYTRIPALTMKGQWLEAAGFATGTEVDVRVMNGCIVLTAQQP).

It belongs to the SymE family.

The protein resides in the cytoplasm. In terms of biological role, involved in the degradation and recycling of damaged RNA. It is itself a target for degradation by the ATP-dependent protease Lon. This chain is Endoribonuclease SymE, found in Salmonella heidelberg (strain SL476).